The primary structure comprises 475 residues: Histidine--tRNA ligase (475 aa).

This sequence belongs to the class-II aminoacyl-tRNA synthetase family. Homodimer.

The protein localises to the cytoplasm. The enzyme catalyses tRNA(His) + L-histidine + ATP = L-histidyl-tRNA(His) + AMP + diphosphate + H(+). This chain is Histidine--tRNA ligase, found in Flavobacterium johnsoniae (strain ATCC 17061 / DSM 2064 / JCM 8514 / BCRC 14874 / CCUG 350202 / NBRC 14942 / NCIMB 11054 / UW101) (Cytophaga johnsonae).